The primary structure comprises 448 residues: Antizyme inhibitor 1 (448 aa).

This sequence belongs to the Orn/Lys/Arg decarboxylase class-II family. ODC antizyme inhibitor subfamily. As to quaternary structure, monomer. Interacts with OAZ1 and OAZ3; this interaction disrupts the interaction between the antizyme and ODC1. Post-translationally, ubiquitinated, leading to its proteasomal degradation; a process that is reduced in presence of antizyme OAZ1. As to expression, expressed in various tissues including liver, heart and kidney.

Its subcellular location is the nucleus. Its function is as follows. Antizyme inhibitor (AZI) protein that positively regulates ornithine decarboxylase (ODC) activity and polyamine uptake. AZI is an enzymatically inactive ODC homolog that counteracts the negative effect of ODC antizymes (AZs) OAZ1, OAZ2 and OAZ3 on ODC activity by competing with ODC for antizyme-binding. Inhibits antizyme-dependent ODC degradation and releases ODC monomers from their inactive complex with antizymes, leading to formation of the catalytically active ODC homodimer and restoring polyamine production. In Rattus norvegicus (Rat), this protein is Antizyme inhibitor 1 (Azin1).